The sequence spans 367 residues: Chorismate synthase (367 aa).

2 residues coordinate NADP(+): R48 and R54. FMN-binding positions include 125 to 127, 238 to 239, G278, 293 to 297, and R319; these read RSS, NA, and KPTSS.

This sequence belongs to the chorismate synthase family. In terms of assembly, homotetramer. FMNH2 serves as cofactor.

It catalyses the reaction 5-O-(1-carboxyvinyl)-3-phosphoshikimate = chorismate + phosphate. The protein operates within metabolic intermediate biosynthesis; chorismate biosynthesis; chorismate from D-erythrose 4-phosphate and phosphoenolpyruvate: step 7/7. Catalyzes the anti-1,4-elimination of the C-3 phosphate and the C-6 proR hydrogen from 5-enolpyruvylshikimate-3-phosphate (EPSP) to yield chorismate, which is the branch point compound that serves as the starting substrate for the three terminal pathways of aromatic amino acid biosynthesis. This reaction introduces a second double bond into the aromatic ring system. The polypeptide is Chorismate synthase (Xanthomonas campestris pv. campestris (strain 8004)).